A 92-amino-acid polypeptide reads, in one-letter code: C-C motif chemokine 4 (92 aa).

A signal peptide spans 1-23 (MKLCVTVLSLLVLVAAFCSPALS). 2 disulfides stabilise this stretch: Cys-34–Cys-58 and Cys-35–Cys-74.

This sequence belongs to the intercrine beta (chemokine CC) family. Homodimer. Interacts with CCR5.

It localises to the secreted. In terms of biological role, monokine with inflammatory and chemokinetic properties. This chain is C-C motif chemokine 4 (CCL4), found in Sus scrofa (Pig).